The primary structure comprises 513 residues: Cytochrome P450 4p1 (513 aa).

Heme is bound by residues glutamate 320 and cysteine 459.

This sequence belongs to the cytochrome P450 family. Heme is required as a cofactor.

The protein resides in the endoplasmic reticulum membrane. It is found in the microsome membrane. Functionally, may be involved in the metabolism of insect hormones and in the breakdown of synthetic insecticides. This chain is Cytochrome P450 4p1 (Cyp4p1), found in Drosophila melanogaster (Fruit fly).